The sequence spans 126 residues: Major sperm protein 1 (126 aa).

At Ala2 the chain carries N-acetylalanine. The MSP domain maps to 8 to 125 (DIATMPAQKV…RRKNLPIEYN (118 aa)).

Sperm.

Its subcellular location is the cell projection. The protein localises to the pseudopodium. The protein resides in the cytoplasm. It is found in the cytoskeleton. In terms of biological role, central component in molecular interactions underlying sperm crawling. Forms an extensive filament system that extends from sperm villipoda, along the leading edge of the pseudopod. The chain is Major sperm protein 1 (MSP-1) from Globodera rostochiensis (Golden nematode worm).